A 588-amino-acid polypeptide reads, in one-letter code: MMRTHYCGALNRNNIGQDVTLSGWVHRRRDLGGLIFIDMRDRDGIVQVYFDPKYQDALTAAASLRNEFCIQIKGEVIARPENQINKNMATGEVEVLAKELRIYNASDVLPLDFNQNNTEEQRLKYRYLDLRRPEMAQRLKTRAKITSFVRRFMDDNGFLDIETPMLTKATPEGARDYLVPSRVHKGKFYALPQSPQLFKQLLMMSGFDRYYQIVKCFRDEDLRADRQPEFTQIDVETSFLTAPEVREIMERMVHGLWLDTIGVDLGKFPVMTWQEAMCRFGSDKPDLRNPLEMVDVADIVKDVEFKVFNEPANNPNGRVAVIRVPNGAEITRKQIDEYTQFVGIYGAKGLAWAKVNDINVGLEGVQSPIAKFLNEEVWKALAERVNAQTGDILFFGADKWQTTTDAMGALRLKLGRDLGLTRLDEWQPLWVIDFPMFERDEEGNLAAMHHPFTSPKDFSPEQLEADPTSAVANAYDMVINGYEVGGGSVRIFDPKMQQTVFRILGIDEEQQREKFGFLLDALKFGTPPHAGLAFGLDRLTMLLTGTENIRDVIAFPKTTAAACLMTEAPSFANPQALEELAISVVKAE.

An L-aspartate-binding site is contributed by glutamate 172. The segment at 196–199 is aspartate; sequence QLFK. Arginine 218 contacts L-aspartate. ATP is bound by residues 218 to 220 and glutamine 227; that span reads RDE. L-aspartate is bound at residue histidine 449. Residue glutamate 483 coordinates ATP. Residue arginine 490 participates in L-aspartate binding. Residue 535–538 participates in ATP binding; it reads GLDR.

This sequence belongs to the class-II aminoacyl-tRNA synthetase family. Type 1 subfamily. In terms of assembly, homodimer.

The protein localises to the cytoplasm. It catalyses the reaction tRNA(Asp) + L-aspartate + ATP = L-aspartyl-tRNA(Asp) + AMP + diphosphate. Catalyzes the attachment of L-aspartate to tRNA(Asp) in a two-step reaction: L-aspartate is first activated by ATP to form Asp-AMP and then transferred to the acceptor end of tRNA(Asp). The protein is Aspartate--tRNA ligase of Haemophilus influenzae (strain PittGG).